We begin with the raw amino-acid sequence, 38 residues long: Cytochrome b6-f complex subunit 5 (38 aa).

A helical transmembrane segment spans residues 5–25 (LLLGIVLGLIPITLAGLFVAA).

It belongs to the PetG family. In terms of assembly, the 4 large subunits of the cytochrome b6-f complex are cytochrome b6, subunit IV (17 kDa polypeptide, PetD), cytochrome f and the Rieske protein, while the 4 small subunits are PetG, PetL, PetM and PetN. The complex functions as a dimer.

Its subcellular location is the cellular thylakoid membrane. Its function is as follows. Component of the cytochrome b6-f complex, which mediates electron transfer between photosystem II (PSII) and photosystem I (PSI), cyclic electron flow around PSI, and state transitions. PetG is required for either the stability or assembly of the cytochrome b6-f complex. This chain is Cytochrome b6-f complex subunit 5, found in Crocosphaera subtropica (strain ATCC 51142 / BH68) (Cyanothece sp. (strain ATCC 51142)).